Consider the following 2185-residue polypeptide: DNA polymerase epsilon catalytic subunit A (2185 aa).

The Zn(2+) site is built by Cys-2072, Cys-2075, Cys-2094, and Cys-2097. The CysA-type zinc finger occupies 2072-2097 (CEHCSYISDIDICRESMERVFICQSC). [4Fe-4S] cluster-binding residues include Cys-2128, Cys-2131, Cys-2143, and Cys-2145. A CysB motif motif is present at residues 2128–2145 (CNKCHKIKEDAMSPYCPC).

Belongs to the DNA polymerase type-B family. As to quaternary structure, heterotetramer. Consists of 4 subunits: POL2, DPB2, DPB3 and DPB4. Requires [4Fe-4S] cluster as cofactor.

Its subcellular location is the nucleus. It carries out the reaction DNA(n) + a 2'-deoxyribonucleoside 5'-triphosphate = DNA(n+1) + diphosphate. Its function is as follows. DNA polymerase II participates in chromosomal DNA replication. The chain is DNA polymerase epsilon catalytic subunit A (POL2) from Kluyveromyces lactis (strain ATCC 8585 / CBS 2359 / DSM 70799 / NBRC 1267 / NRRL Y-1140 / WM37) (Yeast).